The primary structure comprises 384 residues: S-adenosylmethionine synthase (384 aa).

H15 provides a ligand contact to ATP. D17 is a binding site for Mg(2+). Position 43 (E43) interacts with K(+). 2 residues coordinate L-methionine: E56 and Q99. Residues 99–109 (QSPDINQGVDR) form a flexible loop region. ATP is bound by residues 164–166 (DAK), 230–231 (RF), D239, 245–246 (RK), A262, and K266. L-methionine is bound at residue D239. K270 contributes to the L-methionine binding site.

This sequence belongs to the AdoMet synthase family. In terms of assembly, homotetramer; dimer of dimers. The cofactor is Mg(2+). K(+) serves as cofactor.

It is found in the cytoplasm. It catalyses the reaction L-methionine + ATP + H2O = S-adenosyl-L-methionine + phosphate + diphosphate. The protein operates within amino-acid biosynthesis; S-adenosyl-L-methionine biosynthesis; S-adenosyl-L-methionine from L-methionine: step 1/1. In terms of biological role, catalyzes the formation of S-adenosylmethionine (AdoMet) from methionine and ATP. The overall synthetic reaction is composed of two sequential steps, AdoMet formation and the subsequent tripolyphosphate hydrolysis which occurs prior to release of AdoMet from the enzyme. The sequence is that of S-adenosylmethionine synthase from Escherichia fergusonii (strain ATCC 35469 / DSM 13698 / CCUG 18766 / IAM 14443 / JCM 21226 / LMG 7866 / NBRC 102419 / NCTC 12128 / CDC 0568-73).